The following is a 59-amino-acid chain: Pycsar effector protein MePycTM (59 aa).

Residues 36–56 form a helical membrane-spanning segment; the sequence is VAVAIYLLGAAMLSSGAAVLA.

The protein localises to the cell membrane. Its function is as follows. Pycsar (pyrimidine cyclase system for antiphage resistance) provides immunity against bacteriophage. The pyrimidine cyclase (PycC) synthesizes cyclic nucleotides in response to infection; these serve as specific second messenger signals. The signals activate the adjacent effector, leading to bacterial cell death and abortive phage infection. A clade D Pycsar system. The effector gene of a two-gene Pycsar system. Expression of this and adjacent uridylate cyclase MePycC (AC A0A1C5G2V9) probably confers resistance to bacteriophage. The genes are probably only expressed in response to bacteriophage infection. Probably only responds to cUMP (produced by its cognate NTP cyclase), acts by impairing membrane integrity. This chain is Pycsar effector protein MePycTM, found in Micromonospora echinofusca.